Consider the following 201-residue polypeptide: Cell division protein SepF (201 aa).

Basic and acidic residues predominate over residues 27-38; that stretch reads VQERTSVQRDSR. Residues 27-99 form a disordered region; that stretch reads VQERTSVQRD…PRVQNKDSVR (73 aa). Polar residues predominate over residues 43-54; the sequence is QEASQRSHMTNS. Positions 72 to 81 are enriched in basic and acidic residues; sequence NRQERQRVQR. Polar residues predominate over residues 83 to 92; that stretch reads NAYQQATPRV.

The protein belongs to the SepF family. Homodimer. Interacts with FtsZ.

Its subcellular location is the cytoplasm. In terms of biological role, cell division protein that is part of the divisome complex and is recruited early to the Z-ring. Probably stimulates Z-ring formation, perhaps through the cross-linking of FtsZ protofilaments. Its function overlaps with FtsA. In Streptococcus agalactiae serotype Ia (strain ATCC 27591 / A909 / CDC SS700), this protein is Cell division protein SepF.